A 195-amino-acid polypeptide reads, in one-letter code: Calcineurin B homologous protein 1 (195 aa).

Gly2 carries N-myristoyl glycine lipidation. The short motif at 2 to 6 (GSRAS) is the Necessary for association with microtubule and interaction with GAPDH element. 4 consecutive EF-hand domains span residues 26–61 (SQITRLYSRFTSLDKGENGTLSREDFQRIPELAINP), 66–101 (IINAFFPEGEDQVNFRGFMRTLAHFRPIEDNEKSKD), 110–145 (SRSNKLHFAFRLYDLDKDDKISRDELLQVLRMMVGV), and 151–186 (QLGSIADRTIQEADQDGDSAISFTEFVKVLEKVDVE). Residues Asp123, Asp125, Asp127, Lys129, and Glu134 each coordinate Ca(2+). Positions 138–147 (VLRMMVGVNI) match the Nuclear export signal 1 motif. Ca(2+)-binding residues include Asp164, Asp166, Asp168, and Glu175. Residues 176–185 (FVKVLEKVDV) carry the Nuclear export signal 2 motif.

It belongs to the calcineurin regulatory subunit family. CHP subfamily. Monomer. Interacts with STK17B; the interaction occurs in a calcium-independent manner and induces the translocation of CHP1 from the Golgi to the nucleus. Interacts with GAPDH; the interaction is direct, occurs in a N-myristoylation-dependent manner and facilitates the ability of CHP1 to bind microtubules. Interacts with KIF1B (via the C-terminal end of the kinesin-motor domain); the interaction occurs in a calcium-dependent manner. Associates (via C-terminal domain) with microtubules; the association occurs with polymerized microtubules during the cell cycle in a myristoylation- and calcium-independent manner and is enhanced by GAPDH. Interacts with PPP3CA. Interacts with SLC9A1/NHE1 (via the cytoplasmic C-terminal domain); the interaction occurs at the plasma membrane in a calcium-dependent manner and at a domain that is critical for growth factor stimulation of the exchanger. Interacts with SLC9A3; increases SLC9A3 trafficking and activity at the plasma membrane. Post-translationally, phosphorylated; decreased phosphorylation is associated with an increase in SLC9A1/NHE1 Na(+)/H(+) exchange activity. Phosphorylation occurs in serum-dependent manner. The phosphorylation state may regulate the binding to SLC9A1/NHE1. Both N-myristoylation and calcium-mediated conformational changes are essential for its function in exocytic traffic. N-myristoylation is required for its association with microtubules and interaction with GAPDH, but not for the constitutive association to membranes.

The protein localises to the nucleus. Its subcellular location is the cytoplasm. The protein resides in the cytoskeleton. It localises to the endomembrane system. It is found in the endoplasmic reticulum-Golgi intermediate compartment. The protein localises to the endoplasmic reticulum. Its subcellular location is the cell membrane. The protein resides in the membrane. Its function is as follows. Calcium-binding protein involved in different processes such as regulation of vesicular trafficking, plasma membrane Na(+)/H(+) exchanger and gene transcription. Involved in the constitutive exocytic membrane traffic. Mediates the association between microtubules and membrane-bound organelles of the endoplasmic reticulum and Golgi apparatus and is also required for the targeting and fusion of transcytotic vesicles (TCV) with the plasma membrane. Functions as an integral cofactor in cell pH regulation by controlling plasma membrane-type Na(+)/H(+) exchange activity. Affects the pH sensitivity of SLC9A1/NHE1 by increasing its sensitivity at acidic pH. Required for the stabilization and localization of SLC9A1/NHE1 at the plasma membrane. Inhibits serum- and GTPase-stimulated Na(+)/H(+) exchange. Plays a role as an inhibitor of ribosomal RNA transcription by repressing the nucleolar UBF1 transcriptional activity. May sequester UBF1 in the nucleoplasm and limit its translocation to the nucleolus. Associates to the ribosomal gene promoter. Acts as a negative regulator of the calcineurin/NFAT signaling pathway. Inhibits NFAT nuclear translocation and transcriptional activity by suppressing the calcium-dependent calcineurin phosphatase activity. Also negatively regulates the kinase activity of the apoptosis-induced kinase STK17B. Inhibits both STK17B auto- and substrate-phosphorylations in a calcium-dependent manner. This Bos taurus (Bovine) protein is Calcineurin B homologous protein 1 (CHP1).